Consider the following 345-residue polypeptide: NADPH dehydrogenase (345 aa).

Residue 23-26 (SPMC) participates in FMN binding. Tyrosine 28 serves as a coordination point for substrate. FMN contacts are provided by alanine 60 and glutamine 102. 164–167 (HGAH) lines the substrate pocket. FMN-binding positions include arginine 215 and 307–308 (GR).

The protein belongs to the NADH:flavin oxidoreductase/NADH oxidase family. NamA subfamily. As to quaternary structure, homotetramer. FMN serves as cofactor.

The catalysed reaction is A + NADPH + H(+) = AH2 + NADP(+). In terms of biological role, catalyzes the reduction of the double bond of an array of alpha,beta-unsaturated aldehydes and ketones. It also reduces the nitro group of nitroester and nitroaromatic compounds. It could have a role in detoxification processes. This is NADPH dehydrogenase from Bacillus cereus (strain B4264).